The sequence spans 553 residues: Glucose-6-phosphate isomerase (553 aa).

D-glucose 6-phosphate contacts are provided by residues 164–165 (GS), 215–220 (SKTFTT), glutamine 359, glutamate 363, histidine 394, and lysine 516. Glutamate 363 acts as the Proton donor in catalysis. Residues histidine 394 and lysine 516 contribute to the active site.

It belongs to the GPI family. In terms of assembly, homodimer.

Its subcellular location is the cytoplasm. It is found in the cytosol. The enzyme catalyses alpha-D-glucose 6-phosphate = beta-D-fructose 6-phosphate. The protein operates within carbohydrate degradation; glycolysis; D-glyceraldehyde 3-phosphate and glycerone phosphate from D-glucose: step 2/4. In terms of biological role, in the cytoplasm, catalyzes the conversion of glucose-6-phosphate to fructose-6-phosphate, the second step in glycolysis, and the reverse reaction during gluconeogenesis. The chain is Glucose-6-phosphate isomerase (pgiA) from Aspergillus oryzae (strain ATCC 42149 / RIB 40) (Yellow koji mold).